Reading from the N-terminus, the 344-residue chain is Arginine N-succinyltransferase (344 aa).

Leu125 serves as a coordination point for succinyl-CoA. His229 (proton donor) is an active-site residue.

Belongs to the arginine N-succinyltransferase family.

It catalyses the reaction succinyl-CoA + L-arginine = N(2)-succinyl-L-arginine + CoA + H(+). It functions in the pathway amino-acid degradation; L-arginine degradation via AST pathway; L-glutamate and succinate from L-arginine: step 1/5. Its function is as follows. Catalyzes the transfer of succinyl-CoA to arginine to produce N(2)-succinylarginine. This Escherichia coli O6:K15:H31 (strain 536 / UPEC) protein is Arginine N-succinyltransferase.